Reading from the N-terminus, the 91-residue chain is MGIFDWKHWIVILIVVVLVFGTKKLKGLGSDVGESIKGFRKAMNDDDKPAEQPAPQPQQAQPAPQGSPLNQPHTIDAQAHKVDEPIRKDQV.

The chain crosses the membrane as a helical span at residues 1 to 21 (MGIFDWKHWIVILIVVVLVFG). A disordered region spans residues 41-91 (KAMNDDDKPAEQPAPQPQQAQPAPQGSPLNQPHTIDAQAHKVDEPIRKDQV). Residues 51–64 (EQPAPQPQQAQPAP) are compositionally biased toward low complexity. A compositionally biased stretch (basic and acidic residues) spans 78-91 (QAHKVDEPIRKDQV).

The protein belongs to the TatA/E family. As to quaternary structure, the Tat system comprises two distinct complexes: a TatABC complex, containing multiple copies of TatA, TatB and TatC subunits, and a separate TatA complex, containing only TatA subunits. Substrates initially bind to the TatABC complex, which probably triggers association of the separate TatA complex to form the active translocon.

The protein resides in the cell inner membrane. In terms of biological role, part of the twin-arginine translocation (Tat) system that transports large folded proteins containing a characteristic twin-arginine motif in their signal peptide across membranes. TatA could form the protein-conducting channel of the Tat system. This is Sec-independent protein translocase protein TatA from Pseudomonas syringae pv. syringae (strain B728a).